We begin with the raw amino-acid sequence, 311 residues long: tRNA dimethylallyltransferase (311 aa).

13-20 contacts ATP; the sequence is GPTASGKT. 15–20 contributes to the substrate binding site; sequence TASGKT. Interaction with substrate tRNA regions lie at residues 38–41 and 166–170; these read DSMQ and QRVLR.

The protein belongs to the IPP transferase family. Monomer. It depends on Mg(2+) as a cofactor.

The catalysed reaction is adenosine(37) in tRNA + dimethylallyl diphosphate = N(6)-dimethylallyladenosine(37) in tRNA + diphosphate. Its function is as follows. Catalyzes the transfer of a dimethylallyl group onto the adenine at position 37 in tRNAs that read codons beginning with uridine, leading to the formation of N6-(dimethylallyl)adenosine (i(6)A). This chain is tRNA dimethylallyltransferase, found in Staphylococcus aureus (strain Mu3 / ATCC 700698).